A 188-amino-acid chain; its full sequence is Large ribosomal subunit protein bL9 (188 aa).

Positions 149-170 (RSEEEAERQARGEEIGVEKEEP) are enriched in basic and acidic residues. The tract at residues 149-188 (RSEEEAERQARGEEIGVEKEEPSGFVEEALEETVEAPAEA) is disordered.

Belongs to the bacterial ribosomal protein bL9 family.

In terms of biological role, binds to the 23S rRNA. The chain is Large ribosomal subunit protein bL9 from Gluconacetobacter diazotrophicus (strain ATCC 49037 / DSM 5601 / CCUG 37298 / CIP 103539 / LMG 7603 / PAl5).